The chain runs to 229 residues: Histone H3-like centromeric protein CSE4 (229 aa).

The span at methionine 1–asparagine 35 shows a compositional bias: polar residues. The tract at residues methionine 1–alanine 78 is disordered. The span at proline 53 to leucine 68 shows a compositional bias: basic and acidic residues. The Nuclear localization signal signature appears at lysine 115–tyrosine 132. Positions tyrosine 132–isoleucine 229 are H3-like.

The protein belongs to the histone H3 family. Component of centromeric nucleosomes, where DNA is wrapped around a histone octamer core. The octamer contains two molecules each of H2A, H2B, CSE4/CENPA and H4 assembled in one CSE4-H4 heterotetramer and two H2A-H2B heterodimers. Interacts with the inner kinetochore. Interacts with the central kinetochore protein CTF19. Interacts with YTA7. Ubiquitinated. Is degraded through ubiquitin-mediated proteolysis when not protected by its association to the kinetochore.

Its subcellular location is the nucleus. The protein resides in the chromosome. It localises to the centromere. Functionally, histone H3-like nucleosomal protein that is specifically found in centromeric nucleosomes. Replaces conventional H3 in the nucleosome core of centromeric chromatin that serves as an assembly site for the inner kinetochore. Required for recruitment and assembly of kinetochore proteins, mitotic progression and chromosome segregation. May serve as an epigenetic mark that propagates centromere identity through replication and cell division. Required for functional chromatin architecture at the yeast 2-micron circle partitioning locus and promotes equal plasmid segregation. The sequence is that of Histone H3-like centromeric protein CSE4 (CSE4) from Saccharomyces cerevisiae (strain ATCC 204508 / S288c) (Baker's yeast).